We begin with the raw amino-acid sequence, 908 residues long: Transferrin-binding protein A (908 aa).

A signal peptide spans 1 to 24; it reads MQQQHLFRLNILCLSLMTALPVYA. The short motif at 38 to 45 is the TonB box element; that stretch reads DTIQVKAK. The region spanning 51-176 is the TBDR plug domain; it reads RDNEVTGLGK…LAGSVAFQTK (126 aa). The TBDR beta-barrel domain maps to 187–908; sequence QWGIQSKTAY…NYTFSLEMKF (722 aa). The TonB C-terminal box motif lies at 891–908; the sequence is NRYAAPGRNYTFSLEMKF.

It belongs to the TonB-dependent receptor family. In terms of assembly, binds both human apo- and holo-transferrin (TF), via the TF C-terminus. Forms a large complex with TF and TbpB.

It is found in the cell outer membrane. Neisseria acquires iron by extracting it from serum transferrin (TF) in its human host. Acts as a TF receptor and is required for TF utilization. Binds both apo- and holo-TF, via the TF C-terminus. In Neisseria meningitidis serogroup B, this protein is Transferrin-binding protein A.